The chain runs to 147 residues: Bis(5'-nucleosyl)-tetraphosphatase [asymmetrical] (147 aa).

A2 carries the post-translational modification N-acetylalanine. In terms of domain architecture, Nudix hydrolase spans 2–139 (ALRACGLIIF…EMKATLQEGH (138 aa)). The short motif at 43–64 (GHVDPGENDLETALRETREETG) is the Nudix box element.

It belongs to the Nudix hydrolase family. The cofactor is a divalent metal cation.

The enzyme catalyses P(1),P(4)-bis(5'-guanosyl) tetraphosphate + H2O = GMP + GTP + 2 H(+). It catalyses the reaction a 5'-end CoA-ribonucleoside in mRNA + H2O = a 5'-end phospho-adenosine-phospho-ribonucleoside in mRNA + (R)-4'-phosphopantetheine + 2 H(+). The catalysed reaction is a 5'-end FAD-phospho-ribonucleoside in mRNA + H2O = a 5'-end phospho-adenosine-phospho-ribonucleoside in mRNA + FMN + 2 H(+). Functionally, catalyzes the asymmetric hydrolysis of diadenosine 5',5'''-P1,P4-tetraphosphate (Ap4A) to yield AMP and ATP. Exhibits decapping activity towards FAD-capped RNAs and dpCoA-capped RNAs in vitro. This Mus musculus (Mouse) protein is Bis(5'-nucleosyl)-tetraphosphatase [asymmetrical] (Nudt2).